The primary structure comprises 689 residues: MSEKTFLVEIGTEELPPKALRSLAESFAANFTAELDNAGLAHGNVEWFAAPRRLALKVANLAESQPDREVEKRGPAIAQAFDAEGKPSKAAEGWARGCGITVDQAERLKTDKGEWLLYRAHVKGESTEALVPNMVATSLAKLPIPKLMRWGASDVHFVRPVHTVTLLLGDKVIPATILGIQSDRVIRGHRFMGEPEFTIDNADQYPQILLERGKVIADYEARKAKIKADAEEAARKIGGNADLSESLLEEVASLVEWPVVLTAKFEEKFLAVPAEALVYTMKGDQKYFPVYDNAGKLLPNFIFVANIESKDPTQIISGNEKVVRPRLADAEFFFNTDRKKRLEDHLPRLQTVLFQQQLGTLRDKTDRIQALAGWIAGQIGADVNHATRAGLLSKCDLMTNMVFEFTDTQGVMGMHYARHDGEAEDVAVALNEQYQPRFAGDDLPSNPVACALAIADKMDTLAGIFGIGQHPKGDKDPFALRRAALGVLRIIVEKNLNLDLQTLTEEAARLYGDKLTNANVVDDVIDFMLGRFRAWYQDEGYTVDTIQAVLARRPTRPADFDARMKAVSHFRTLEEASALAAANKRVSNILAKATEPLNDIVHASVLKEAAEIELARHLVVLRDKLQPYFADGRYQEALIELAALRAPVDEFFENVMVNAEEKDIRINRLTLLSKLRELFLQVADISLLQ.

Belongs to the class-II aminoacyl-tRNA synthetase family. In terms of assembly, tetramer of two alpha and two beta subunits.

It localises to the cytoplasm. The catalysed reaction is tRNA(Gly) + glycine + ATP = glycyl-tRNA(Gly) + AMP + diphosphate. This Salmonella schwarzengrund (strain CVM19633) protein is Glycine--tRNA ligase beta subunit.